A 37-amino-acid chain; its full sequence is Cytochrome b6-f complex subunit 5 (37 aa).

The chain crosses the membrane as a helical span at residues 5-25 (LLCGIVLGLVPVTIAGLFVTA).

The protein belongs to the PetG family. In terms of assembly, the 4 large subunits of the cytochrome b6-f complex are cytochrome b6, subunit IV (17 kDa polypeptide, PetD), cytochrome f and the Rieske protein, while the 4 small subunits are PetG, PetL, PetM and PetN. The complex functions as a dimer.

Its subcellular location is the plastid. It localises to the chloroplast thylakoid membrane. Functionally, component of the cytochrome b6-f complex, which mediates electron transfer between photosystem II (PSII) and photosystem I (PSI), cyclic electron flow around PSI, and state transitions. PetG is required for either the stability or assembly of the cytochrome b6-f complex. This chain is Cytochrome b6-f complex subunit 5, found in Chlamydomonas reinhardtii (Chlamydomonas smithii).